The following is a 112-amino-acid chain: Large ribosomal subunit protein eL30 (112 aa).

It belongs to the eukaryotic ribosomal protein eL30 family.

This chain is Large ribosomal subunit protein eL30 (rpl30), found in Dictyostelium discoideum (Social amoeba).